Here is a 117-residue protein sequence, read N- to C-terminus: uncharacterized protein (117 aa).

Positions 1–20 (MAAVHLYIISFTALMISSTS) are cleaved as a signal peptide.

This is an uncharacterized protein from Saccharomyces cerevisiae (strain ATCC 204508 / S288c) (Baker's yeast).